The chain runs to 126 residues: Fluoride-specific ion channel FluC (126 aa).

A run of 4 helical transmembrane segments spans residues 4–24 (PLLS…FLGL), 33–53 (IPLG…FAMA), 67–87 (FVIT…IEIV), and 97–117 (MAML…CLGL). The Na(+) site is built by G74 and T77.

The protein belongs to the fluoride channel Fluc/FEX (TC 1.A.43) family.

It localises to the cell inner membrane. It catalyses the reaction fluoride(in) = fluoride(out). Na(+) is not transported, but it plays an essential structural role and its presence is essential for fluoride channel function. Fluoride-specific ion channel. Important for reducing fluoride concentration in the cell, thus reducing its toxicity. The chain is Fluoride-specific ion channel FluC from Acinetobacter baumannii (strain AB307-0294).